A 378-amino-acid polypeptide reads, in one-letter code: Vacuolar membrane protein CAGL0J10076g (378 aa).

The tract at residues Arg18 to Thr70 is disordered. 2 stretches are compositionally biased toward low complexity: residues Thr25–Thr41 and Ser48–Thr70. The helical transmembrane segment at Phe118–Ile138 threads the bilayer. The tract at residues Asn299–Met368 is disordered. The segment covering Arg321–Arg337 has biased composition (basic residues). The span at Ser343–Arg356 shows a compositional bias: low complexity.

This sequence belongs to the PRM5 family.

It localises to the vacuole membrane. In Candida glabrata (strain ATCC 2001 / BCRC 20586 / JCM 3761 / NBRC 0622 / NRRL Y-65 / CBS 138) (Yeast), this protein is Vacuolar membrane protein CAGL0J10076g.